Reading from the N-terminus, the 39-residue chain is Natriuretic peptide CnNP-a (39 aa).

A propeptide spanning residues 1 to 8 (SGSKTAKI) is cleaved from the precursor. C12 and C28 are oxidised to a cystine.

It belongs to the natriuretic peptide family. In terms of tissue distribution, expressed by the venom gland.

Its subcellular location is the secreted. Snake venom natriuretic peptide that targets both NPR1 and NPR2. Exhibits hypotensive and vasodepressor activities. This chain is Natriuretic peptide CnNP-a, found in Cryptophis nigrescens (Eastern small-eyed snake).